The following is a 345-amino-acid chain: V-type proton ATPase subunit d (345 aa).

At M1 the chain carries N-acetylmethionine.

It belongs to the V-ATPase V0D/AC39 subunit family. As to quaternary structure, V-ATPase is a heteromultimeric enzyme composed of a peripheral catalytic V1 complex (components A to H) attached to an integral membrane V0 proton pore complex (components: a, c, c', c'', d, e, f and VOA1).

It localises to the vacuole membrane. Its function is as follows. Subunit of the V0 complex of vacuolar(H+)-ATPase (V-ATPase), a multisubunit enzyme composed of a peripheral complex (V1) that hydrolyzes ATP and a membrane integral complex (V0) that translocates protons. V-ATPase is responsible for acidifying and maintaining the pH of intracellular compartments. This subunit is a non-integral membrane component of the membrane pore domain and is required for proper assembly of the V0 sector. Might be involved in the regulated assembly of V1 subunits onto the membrane sector or alternatively may prevent the passage of protons through V0 pores. This Saccharomyces cerevisiae (strain ATCC 204508 / S288c) (Baker's yeast) protein is V-type proton ATPase subunit d.